We begin with the raw amino-acid sequence, 530 residues long: Putative sulfate transporter YvdB (530 aa).

Helical transmembrane passes span 19 to 39 (LIAGIVVGVVAIPLGMAFAIA), 41 to 61 (GVEPEYGLYTVVIAGICISLF), 68 to 88 (IGGPTGAFVPILFGIIMQYGL), 91 to 111 (LLIAGFMAGVMLVLFGLFKLG), 121 to 141 (VIVGFTAGIAVLIFTEQIANF), 164 to 184 (LGTFNVYAILTAVIGLVILLV), 192 to 212 (VPGALLALLISTVVAVVFFPD), 241 to 261 (MVMLFPAALVIALLGGLESIL), 313 to 333 (AVSPVSGVVHGVVVLLVLLVF), and 384 to 404 (VLFDLIIGVATGLLLAFVFFI). In terms of domain architecture, STAS spans 420-530 (PVLAKREDPS…FFDHHDEITG (111 aa)).

This sequence belongs to the SLC26A/SulP transporter (TC 2.A.53) family.

The protein resides in the cell membrane. In Bacillus subtilis (strain 168), this protein is Putative sulfate transporter YvdB (yvdB).